The sequence spans 38 residues: Large ribosomal subunit protein bL12 (38 aa).

The protein belongs to the bacterial ribosomal protein bL12 family. Homodimer. Part of the ribosomal stalk of the 50S ribosomal subunit. Forms a multimeric L10(L12)X complex, where L10 forms an elongated spine to which 2 to 4 L12 dimers bind in a sequential fashion. Binds GTP-bound translation factors.

In terms of biological role, forms part of the ribosomal stalk which helps the ribosome interact with GTP-bound translation factors. Is thus essential for accurate translation. This Salinivibrio costicola (Vibrio costicola) protein is Large ribosomal subunit protein bL12 (rplL).